We begin with the raw amino-acid sequence, 106 residues long: uncharacterized protein (106 aa).

The span at 24–35 shows a compositional bias: polar residues; the sequence is ANSISSTSFYHK. Disordered stretches follow at residues 24-49 and 65-87; these read ANSI…SCEE and LTAE…SSDE. Composition is skewed to low complexity over residues 36–46 and 74–85; these read SSNNNSHANAS and SLSASNQPASSS.

This is an uncharacterized protein from Arabidopsis thaliana (Mouse-ear cress).